We begin with the raw amino-acid sequence, 282 residues long: MSVNHYSTDHHHTLLWQQQQHRHTTDTSETTTTATWLHDDLKESLFEKSLTPSDVGKLNRLVIPKQHAEKYFPLNAVLVSSAAADTSSSEKGMLLSFEDESGKSWRFRYSYWNSSQSYVLTKGWSRFVKDKQLDPGDVVFFQRHRSDSRRLFIGWRRRGQGSSSSVAATNSAVNTSSMGALSYHQIHATSNYSNPPSHSEYSHYGAAVATAAETHSTPSSSVVGSSRTVRLFGVNLECQMDENDGDDSVAVATTVESPDGYYGQNMYYYYSHPHNMVILTLL.

The TF-B3 DNA-binding region spans 46 to 159; it reads FEKSLTPSDV…RLFIGWRRRG (114 aa).

It is found in the nucleus. In Arabidopsis thaliana (Mouse-ear cress), this protein is B3 domain-containing protein At5g06250.